A 106-amino-acid chain; its full sequence is NADH dehydrogenase [ubiquinone] iron-sulfur protein 5 (106 aa).

Positions 30-74 (AGRCHAFEKEWIECAHGIGYTRAEKECKIEYDDFVECLLRQKTMR) constitute a CHCH domain. Short sequence motifs (cx9C motif) lie at residues 33-43 (CHAFEKEWIEC) and 56-66 (CKIEYDDFVEC). 2 disulfide bridges follow: Cys-33-Cys-66 and Cys-43-Cys-56. The segment at 84–106 (DKLIKEGKYTPPPHHIGKGEPRP) is disordered.

Belongs to the complex I NDUFS5 subunit family. Mammalian complex I is composed of 45 different subunits. This is a component of the iron-sulfur (IP) fragment of the enzyme.

It localises to the mitochondrion inner membrane. The protein resides in the mitochondrion intermembrane space. In terms of biological role, accessory subunit of the mitochondrial membrane respiratory chain NADH dehydrogenase (Complex I), that is believed not to be involved in catalysis. Complex I functions in the transfer of electrons from NADH to the respiratory chain. The immediate electron acceptor for the enzyme is believed to be ubiquinone. This chain is NADH dehydrogenase [ubiquinone] iron-sulfur protein 5 (NDUFS5), found in Homo sapiens (Human).